We begin with the raw amino-acid sequence, 151 residues long: 6,7-dimethyl-8-ribityllumazine synthase (151 aa).

5-amino-6-(D-ribitylamino)uracil-binding positions include F23, 55–57 (AYE), and 79–81 (AVI). 84–85 (AT) lines the (2S)-2-hydroxy-3-oxobutyl phosphate pocket. The active-site Proton donor is H87. Residue F111 coordinates 5-amino-6-(D-ribitylamino)uracil. A (2S)-2-hydroxy-3-oxobutyl phosphate-binding site is contributed by R125.

It belongs to the DMRL synthase family.

The enzyme catalyses (2S)-2-hydroxy-3-oxobutyl phosphate + 5-amino-6-(D-ribitylamino)uracil = 6,7-dimethyl-8-(1-D-ribityl)lumazine + phosphate + 2 H2O + H(+). The protein operates within cofactor biosynthesis; riboflavin biosynthesis; riboflavin from 2-hydroxy-3-oxobutyl phosphate and 5-amino-6-(D-ribitylamino)uracil: step 1/2. Functionally, catalyzes the formation of 6,7-dimethyl-8-ribityllumazine by condensation of 5-amino-6-(D-ribitylamino)uracil with 3,4-dihydroxy-2-butanone 4-phosphate. This is the penultimate step in the biosynthesis of riboflavin. The protein is 6,7-dimethyl-8-ribityllumazine synthase of Leptospira interrogans serogroup Icterohaemorrhagiae serovar copenhageni (strain Fiocruz L1-130).